Here is a 683-residue protein sequence, read N- to C-terminus: Cytochrome P450 monooxygenase htyF (683 aa).

The chain crosses the membrane as a helical span at residues 8 to 28; it reads PALLAASVVLAVSLVSYVIQL. The N-linked (GlcNAc...) asparagine glycan is linked to Asn29. Position 481 (Cys481) interacts with heme. N-linked (GlcNAc...) asparagine glycosylation is present at Asn581. The chain crosses the membrane as a helical span at residues 588-608; the sequence is LYVFVVLVACVAALFIGIGIY.

The protein belongs to the cytochrome P450 family. Heme is required as a cofactor.

Its subcellular location is the membrane. It functions in the pathway antifungal biosynthesis. Functionally, cytochrome P450 monooxygenase; part of the gene cluster that mediates the de novo generation of L-homotyrosine from acetyl-CoA and 4-hydroxyphenyl-pyruvate. L-homotyrosine is a building block of echinocandin B, a fungal lipidated cyclic hexapeptide that acts as an antifungal agent. L-homotyrosine 4-hydroxyphenyl-pyruvate first undergoes an aldol-type condensation by htyA with the C-2 of acetyl-CoA followed by the release of CoA to form 2-(4-hydroxybenzyl)-malate. This is followed by isomerization of 2-(4-hydroxy-benzyl)-malate to 3-(4-hydroxybenzyl)-malate by htyD. Thereafter, 3-(4-hydroxybenzyl)-malate undergoes decarboxylation and oxidation to form 2-oxo-4-(4-hydroxybenzyl)butanoic acid, coupled to reduction of NAD(+) to NADH by htyC. The product then undergoes transamination catalyzed by htyB to form L-homotyrosine. The polypeptide is Cytochrome P450 monooxygenase htyF (Aspergillus rugulosus (Emericella rugulosa)).